A 762-amino-acid polypeptide reads, in one-letter code: Centrosomal protein of 85 kDa (762 aa).

2 disordered regions span residues Met1 to Gly26 and Val94 to Pro119. Polar residues-rich tracts occupy residues His14 to Gly26 and Thr98 to Val111. Ser17 bears the Phosphoserine mark. Phosphoserine is present on residues Ser126 and Ser141. Residues Gly257–Ala433 form a mediates interaction with NEK2 and is required for its function in the suppression of centrosome disjunction region. Coiled coils occupy residues Glu334 to Gln657 and Pro723 to Arg750. Residues Leu434 to Ile476 form a required for centrosome localization and for its function in the suppression of centrosome disjunction region. Composition is skewed to basic and acidic residues over residues Lys443–Ile455 and Gln463–Gln474. 2 disordered regions span residues Lys443–Gln474 and Glu541–Glu570. Ser623 carries the phosphoserine modification.

The protein belongs to the CEP85 family. In terms of assembly, homodimer. Interacts with STIL (via N-terminus); this interaction is essential for robust PLK4 activation and efficient centriole assembly and for PLK4-dependent cell migration. Interacts with PLK4; required for CEP85 to be able to drive centriole duplication and cell migration.

It localises to the cytoplasm. Its subcellular location is the cytoskeleton. The protein localises to the microtubule organizing center. The protein resides in the centrosome. It is found in the spindle pole. It localises to the nucleus. Its subcellular location is the nucleolus. The protein localises to the centriole. The protein resides in the cell cortex. Functionally, acts as a regulator of centriole duplication through a direct interaction with STIL, a key factor involved in the early steps of centriole formation. The CEP85-STIL protein complex acts as a modulator of PLK4-driven cytoskeletal rearrangements and directional cell motility. Acts as a negative regulator of NEK2 to maintain the centrosome integrity in interphase. Suppresses centrosome disjunction by inhibiting NEK2 kinase activity. This Homo sapiens (Human) protein is Centrosomal protein of 85 kDa.